Here is a 237-residue protein sequence, read N- to C-terminus: Small ribosomal subunit protein uS3 (237 aa).

A KH type-2 domain is found at 39–107 (IRAYLMEELK…ETHLNIVEVR (69 aa)). Positions 213-237 (MASERRATESDNQGGSGRERRRENA) are disordered.

The protein belongs to the universal ribosomal protein uS3 family. In terms of assembly, part of the 30S ribosomal subunit. Forms a tight complex with proteins S10 and S14.

In terms of biological role, binds the lower part of the 30S subunit head. Binds mRNA in the 70S ribosome, positioning it for translation. This chain is Small ribosomal subunit protein uS3, found in Rhizobium meliloti (strain 1021) (Ensifer meliloti).